Reading from the N-terminus, the 217-residue chain is Adenylate kinase (217 aa).

Position 10 to 15 (10 to 15 (GAGKGT)) interacts with ATP. An NMP region spans residues 30–59 (STGDMFRAAMKEETDLGLEAKSYIDKGELV). AMP is bound by residues Thr-31, Arg-36, 57–59 (ELV), 85–88 (GFPR), and Gln-92. An LID region spans residues 126–163 (GRRICKNCGATYHLVFNPPAKENVCDKCGGELYQREDD). Arg-127 lines the ATP pocket. Zn(2+) contacts are provided by Cys-130 and Cys-133. 136-137 (TY) lines the ATP pocket. Zn(2+)-binding residues include Cys-150 and Cys-153. AMP contacts are provided by Arg-160 and Arg-171. Lys-199 contacts ATP.

Belongs to the adenylate kinase family. In terms of assembly, monomer.

The protein resides in the cytoplasm. It catalyses the reaction AMP + ATP = 2 ADP. The protein operates within purine metabolism; AMP biosynthesis via salvage pathway; AMP from ADP: step 1/1. In terms of biological role, catalyzes the reversible transfer of the terminal phosphate group between ATP and AMP. Plays an important role in cellular energy homeostasis and in adenine nucleotide metabolism. The polypeptide is Adenylate kinase (Bacillus licheniformis (strain ATCC 14580 / DSM 13 / JCM 2505 / CCUG 7422 / NBRC 12200 / NCIMB 9375 / NCTC 10341 / NRRL NRS-1264 / Gibson 46)).